A 101-amino-acid polypeptide reads, in one-letter code: NAD(P)H-quinone oxidoreductase subunit 4L, chloroplastic (101 aa).

The next 3 helical transmembrane spans lie at 2-22 (MLEH…YGLI), 32-52 (MCLE…SDLF), and 61-81 (IFSI…PAIV).

The protein belongs to the complex I subunit 4L family. As to quaternary structure, NDH is composed of at least 16 different subunits, 5 of which are encoded in the nucleus.

It is found in the plastid. The protein resides in the chloroplast thylakoid membrane. It catalyses the reaction a plastoquinone + NADH + (n+1) H(+)(in) = a plastoquinol + NAD(+) + n H(+)(out). The enzyme catalyses a plastoquinone + NADPH + (n+1) H(+)(in) = a plastoquinol + NADP(+) + n H(+)(out). Its function is as follows. NDH shuttles electrons from NAD(P)H:plastoquinone, via FMN and iron-sulfur (Fe-S) centers, to quinones in the photosynthetic chain and possibly in a chloroplast respiratory chain. The immediate electron acceptor for the enzyme in this species is believed to be plastoquinone. Couples the redox reaction to proton translocation, and thus conserves the redox energy in a proton gradient. In Ceratophyllum demersum (Rigid hornwort), this protein is NAD(P)H-quinone oxidoreductase subunit 4L, chloroplastic.